We begin with the raw amino-acid sequence, 170 residues long: Peptide methionine sulfoxide reductase MsrA (170 aa).

Cys13 is a catalytic residue.

Belongs to the MsrA Met sulfoxide reductase family.

The enzyme catalyses L-methionyl-[protein] + [thioredoxin]-disulfide + H2O = L-methionyl-(S)-S-oxide-[protein] + [thioredoxin]-dithiol. It catalyses the reaction [thioredoxin]-disulfide + L-methionine + H2O = L-methionine (S)-S-oxide + [thioredoxin]-dithiol. Has an important function as a repair enzyme for proteins that have been inactivated by oxidation. Catalyzes the reversible oxidation-reduction of methionine sulfoxide in proteins to methionine. In Nocardia farcinica (strain IFM 10152), this protein is Peptide methionine sulfoxide reductase MsrA.